A 342-amino-acid chain; its full sequence is Pre-mRNA-splicing factor 18 (342 aa).

The residue at position 1 (Met1) is an N-acetylmethionine.

Belongs to the PRP18 family. As to quaternary structure, heterodimer with PPIH. Interacts with PRPF4 and with the spliceosome. Part of a complex containing U4/U6 snRNPs.

The protein resides in the nucleus speckle. Functionally, participates in the second step of pre-mRNA splicing. The polypeptide is Pre-mRNA-splicing factor 18 (PRPF18) (Bos taurus (Bovine)).